The primary structure comprises 30 residues: Dermaseptin-S3 (30 aa).

Belongs to the frog skin active peptide (FSAP) family. Dermaseptin subfamily. As to quaternary structure, monomer and oligomer. Forms aggregates in aqueous environments. As to expression, expressed by the skin glands.

The protein localises to the secreted. Functionally, potent antimicrobial peptide with activity against bacteria and protozoa. Also has activity against fungi. Probably acts by disturbing membrane functions with its amphipathic structure. Binds to healthy erythrocytes (this binding is receptor independent), but has very weak hemolytic activity. Does not bind to P.falciparum infected erythrocytes, but accumulates within the parasite. Kills the parasite, but has no hemolytic activity on the host cell. This chain is Dermaseptin-S3, found in Phyllomedusa sauvagei (Sauvage's leaf frog).